A 428-amino-acid chain; its full sequence is Glutamate-1-semialdehyde 2,1-aminomutase 1 (428 aa).

Lys-267 bears the N6-(pyridoxal phosphate)lysine mark.

This sequence belongs to the class-III pyridoxal-phosphate-dependent aminotransferase family. HemL subfamily. As to quaternary structure, homodimer. Pyridoxal 5'-phosphate is required as a cofactor.

It is found in the cytoplasm. The enzyme catalyses (S)-4-amino-5-oxopentanoate = 5-aminolevulinate. It participates in porphyrin-containing compound metabolism; protoporphyrin-IX biosynthesis; 5-aminolevulinate from L-glutamyl-tRNA(Glu): step 2/2. The polypeptide is Glutamate-1-semialdehyde 2,1-aminomutase 1 (Staphylococcus aureus (strain MW2)).